The sequence spans 689 residues: MKNYGPISSKVTKMLHGADYNPEQWIDMPNIWGEDVRLMKLSHTNVVAVGIFSWTMLEPEEGKFNFEWLDEIMDLMHKNGNYVILATPSGAKPIWMAHKYPETLRVAQNRVRNLYGERHNHCYTSPIYREKIAIIDRLLAERYKDHPALILWHISNEFEGQCYCPLCEEAFRDFLREKYDNDINKLNKAWWTKFWSHTYASFDEIEAPAPHGEPALHGLNLDWMRFVTHQTLDYYKHERSILKEITPDIPVTTNFHDYISLFRGIDYWKFAPYLDVVSWDNYPYWHGERTDDHEGSRIGFVHDLNRAILNGKPFMMMESSPSSTNWQPVAKLRRPGMHVLSSLQAVAHGSDTVQYFQWRKSRGSSEKFHGAVVDHCGHENTRVFRDVTKVGEILSKLDDVIGTSVEPQVAVIYDWENYWAINDAQGPRIEQKDYFETCQKHYKAFWDMSIPTDVINMDCDFSKYKVVVAPMLYMVRPGVGERLEEFVKNGGTLVTTYWSGIVDENDLCFLGGFPGPLKKVTGIWAEELDALYDEDVNYVSVEEGNSLGMKGEYEARIFCDLIHSEGAEVLATYKTDFYKGMPALTCNNFGEGQAYYIAFRNNDEFLSDFYSSLAKKLTLKRAIEIDLPKGINAQVRMDEKNEFVFFMNFSSEEKTIDIKDLDLTDMVTGEKVAKEMEIEPYGVRIVRRK.

Position 118 (R118) interacts with substrate. C122 contributes to the Zn(2+) binding site. A substrate-binding site is contributed by N156. The active-site Proton donor is E157. Zn(2+) is bound by residues C162, C164, and C167. The active-site Nucleophile is the E318. Residues W326 and 366-369 (EKFH) contribute to the substrate site.

The protein belongs to the glycosyl hydrolase 42 family.

The catalysed reaction is Hydrolysis of terminal non-reducing beta-D-galactose residues in beta-D-galactosides.. This chain is Beta-galactosidase Pbg, found in Clostridium perfringens (strain ATCC 13124 / DSM 756 / JCM 1290 / NCIMB 6125 / NCTC 8237 / Type A).